The following is a 78-amino-acid chain: Acyl carrier protein (78 aa).

The Carrier domain occupies 2 to 77; the sequence is STIEERVKKI…AAIDYINGHQ (76 aa). S37 is subject to O-(pantetheine 4'-phosphoryl)serine.

This sequence belongs to the acyl carrier protein (ACP) family. 4'-phosphopantetheine is transferred from CoA to a specific serine of apo-ACP by AcpS. This modification is essential for activity because fatty acids are bound in thioester linkage to the sulfhydryl of the prosthetic group.

The protein resides in the cytoplasm. It functions in the pathway lipid metabolism; fatty acid biosynthesis. In terms of biological role, carrier of the growing fatty acid chain in fatty acid biosynthesis. In Erwinia tasmaniensis (strain DSM 17950 / CFBP 7177 / CIP 109463 / NCPPB 4357 / Et1/99), this protein is Acyl carrier protein.